We begin with the raw amino-acid sequence, 353 residues long: Phosphate acyltransferase (353 aa).

This sequence belongs to the PlsX family. In terms of assembly, homodimer. Probably interacts with PlsY.

It localises to the cytoplasm. The catalysed reaction is a fatty acyl-[ACP] + phosphate = an acyl phosphate + holo-[ACP]. The protein operates within lipid metabolism; phospholipid metabolism. In terms of biological role, catalyzes the reversible formation of acyl-phosphate (acyl-PO(4)) from acyl-[acyl-carrier-protein] (acyl-ACP). This enzyme utilizes acyl-ACP as fatty acyl donor, but not acyl-CoA. The protein is Phosphate acyltransferase of Rhodopseudomonas palustris (strain BisB18).